Reading from the N-terminus, the 160-residue chain is 2-C-methyl-D-erythritol 2,4-cyclodiphosphate synthase (160 aa).

The a divalent metal cation site is built by Asp-12 and His-14. 4-CDP-2-C-methyl-D-erythritol 2-phosphate-binding positions include 12-14 (DVH) and 38-39 (HS). His-46 contributes to the a divalent metal cation binding site. Residues 60–62 (DIG), 65–69 (FPDTD), 136–139 (TTTE), Phe-143, and Arg-146 contribute to the 4-CDP-2-C-methyl-D-erythritol 2-phosphate site.

It belongs to the IspF family. As to quaternary structure, homotrimer. The cofactor is a divalent metal cation.

The enzyme catalyses 4-CDP-2-C-methyl-D-erythritol 2-phosphate = 2-C-methyl-D-erythritol 2,4-cyclic diphosphate + CMP. It participates in isoprenoid biosynthesis; isopentenyl diphosphate biosynthesis via DXP pathway; isopentenyl diphosphate from 1-deoxy-D-xylulose 5-phosphate: step 4/6. Its function is as follows. Involved in the biosynthesis of isopentenyl diphosphate (IPP) and dimethylallyl diphosphate (DMAPP), two major building blocks of isoprenoid compounds. Catalyzes the conversion of 4-diphosphocytidyl-2-C-methyl-D-erythritol 2-phosphate (CDP-ME2P) to 2-C-methyl-D-erythritol 2,4-cyclodiphosphate (ME-CPP) with a corresponding release of cytidine 5-monophosphate (CMP). The polypeptide is 2-C-methyl-D-erythritol 2,4-cyclodiphosphate synthase (Acinetobacter baumannii (strain AB307-0294)).